Consider the following 431-residue polypeptide: Serine--tRNA ligase (431 aa).

L-serine is bound at residue 237–239 (TAE). 268–270 (RSE) is a binding site for ATP. Glutamate 291 is an L-serine binding site. 355 to 358 (EISS) contributes to the ATP binding site. Position 390 (serine 390) interacts with L-serine.

It belongs to the class-II aminoacyl-tRNA synthetase family. Type-1 seryl-tRNA synthetase subfamily. As to quaternary structure, homodimer. The tRNA molecule binds across the dimer.

The protein localises to the cytoplasm. The catalysed reaction is tRNA(Ser) + L-serine + ATP = L-seryl-tRNA(Ser) + AMP + diphosphate + H(+). It carries out the reaction tRNA(Sec) + L-serine + ATP = L-seryl-tRNA(Sec) + AMP + diphosphate + H(+). It participates in aminoacyl-tRNA biosynthesis; selenocysteinyl-tRNA(Sec) biosynthesis; L-seryl-tRNA(Sec) from L-serine and tRNA(Sec): step 1/1. Functionally, catalyzes the attachment of serine to tRNA(Ser). Is also able to aminoacylate tRNA(Sec) with serine, to form the misacylated tRNA L-seryl-tRNA(Sec), which will be further converted into selenocysteinyl-tRNA(Sec). The protein is Serine--tRNA ligase of Neisseria meningitidis serogroup A / serotype 4A (strain DSM 15465 / Z2491).